A 103-amino-acid polypeptide reads, in one-letter code: Large ribosomal subunit protein eL14 (103 aa).

The protein belongs to the eukaryotic ribosomal protein eL14 family.

This is Large ribosomal subunit protein eL14 from Pyrobaculum neutrophilum (strain DSM 2338 / JCM 9278 / NBRC 100436 / V24Sta) (Thermoproteus neutrophilus).